A 724-amino-acid chain; its full sequence is Hyperosmolality-gated Ca2+ permeable channel 3.1 (724 aa).

At 1-4 the chain is on the extracellular side; that stretch reads MEFG. A helical membrane pass occupies residues 5-25; it reads SFLVSLGTSFVIFVILMLLFT. Over 26–85 the chain is Cytoplasmic; the sequence is WLSRKSGNAPIYYPNRILKGLEPWEGTSLTRNPFAWMREALTSSEQDVVNLSGVDTAVHF. Residues 86–108 form a helical membrane-spanning segment; the sequence is VFLSTVLGIFACSSLLLLPTLLP. Residues 109-147 are Extracellular-facing; that stretch reads LAATDNNIKNTKNATDTTSKGTFSQLDNLSMANITKKSS. The helical transmembrane segment at 148–170 threads the bilayer; sequence RLWAFLGAVYWISLVTYFFLWKA. The Cytoplasmic segment spans residues 171–358; that stretch reads YKHVSSLRAQ…WQNLNIKLFS (188 aa). Positions 241–309 form a coiled coil; that stretch reads EKLEGYKKKL…KAVLAEKQQT (69 aa). The helical transmembrane segment at 359-385 threads the bilayer; that stretch reads RIIRQYFIYFFVAVTILFYMIPIAFVS. The Extracellular segment spans residues 386–411; sequence AITTLKNLQRIIPFIKPVVEITAIRT. A helical transmembrane segment spans residues 412 to 439; the sequence is VLESFLPQIALIVFLAMLPKLLLFLSKA. Topologically, residues 440–448 are cytoplasmic; it reads EGIPSQSHA. Residues 449-472 traverse the membrane as a helical segment; it reads IRAASGKYFYFSVFNVFIGVTLAG. Residues 473-497 lie on the Extracellular side of the membrane; it reads TLFNTVKDIAKNPKLDMIINLLATS. A helical membrane pass occupies residues 498–529; that stretch reads LPKSATFFLTYVALKFFIGYGLELSRIIPLII. Residues 530 to 554 are Cytoplasmic-facing; the sequence is FHLKKKYLCKTEAEVKEAWYPGDLS. Residues 555–574 traverse the membrane as a helical segment; it reads YATRVPGDMLILTITFCYSV. A topological domain (extracellular) is located at residue I575. The chain crosses the membrane as a helical span at residues 576 to 594; sequence APLILIFGITYFGLGWLVL. The Cytoplasmic portion of the chain corresponds to 595-612; it reads RNQALKVYVPSYESYGRM. The chain crosses the membrane as a helical span at residues 613 to 636; sequence WPHIHQRILAALFLFQVVMFGYLG. Residues 637-641 are Extracellular-facing; the sequence is AKTFF. The chain crosses the membrane as a helical span at residues 642-662; sequence YTALVIPLIITSLIFGYVCRQ. At 663-724 the chain is on the cytoplasmic side; sequence KFYGGFEHTA…YQDFNAIAGV (62 aa).

This sequence belongs to the CSC1 (TC 1.A.17) family. In terms of assembly, homodimer.

The protein localises to the membrane. Its function is as follows. Acts as a hyperosmolarity-gated non-selective cation channel that permeates Ca(2+) ions. Mechanosensitive ion channel that converts mechanical stimuli into a flow of ions: activated in response to membrane stretch. Not activated in response to membrane poke. The polypeptide is Hyperosmolality-gated Ca2+ permeable channel 3.1 (Arabidopsis thaliana (Mouse-ear cress)).